The following is a 122-amino-acid chain: uncharacterized protein (122 aa).

2 disordered regions span residues 1–30 (MGRE…DQPE) and 96–122 (FKSC…DAMG).

This is an uncharacterized protein from Homo sapiens (Human).